The chain runs to 152 residues: Pleckstrin homology-like domain family A member 2 (152 aa).

S3 and S42 each carry phosphoserine. Positions 7–99 (VLREGELEKR…WNAAIALALI (93 aa)) constitute a PH domain. Residues 112–152 (SRQERTAPAAPAEDAVAAAAAAPSEPSEPSRPSPQPKPRTP) form a disordered region. Low complexity predominate over residues 118–138 (APAAPAEDAVAAAAAAPSEPS). Pro residues predominate over residues 140–152 (PSRPSPQPKPRTP). Residues S141 and S144 each carry the phosphoserine modification. T151 is subject to Phosphothreonine.

This sequence belongs to the PHLDA2 family. As to expression, expressed in placenta and adult prostate gland. In placenta, it is present in all cells of the villous cytotrophoblast. The protein is absent in cells from hydatidiform moles. Hydatidiform mole is a gestation characterized by abnormal development of both fetus and trophoblast. The majority of hydatidiform moles are associated with an excess of paternal to maternal genomes and are likely to result from the abnormal expression of imprinted genes (at protein level). Expressed at low levels in adult liver and lung, and fetal liver. Expressed in adult brain and neuroblastoma, medullablastoma and glioblastoma cell lines.

Its subcellular location is the cytoplasm. The protein localises to the membrane. In terms of biological role, plays a role in regulating placenta growth. May act via its PH domain that competes with other PH domain-containing proteins, thereby preventing their binding to membrane lipids. The sequence is that of Pleckstrin homology-like domain family A member 2 (PHLDA2) from Homo sapiens (Human).